We begin with the raw amino-acid sequence, 199 residues long: Protein GrpE (199 aa).

The segment covering 1–24 (MSKQNKKDWKKFRDEHKEEHKVEN) has biased composition (basic and acidic residues). The segment at 1 to 52 (MSKQNKKDWKKFRDEHKEEHKVENEILEEETDEESQHQEPALGHPSYTALEE) is disordered.

The protein belongs to the GrpE family. As to quaternary structure, homodimer.

The protein localises to the cytoplasm. Participates actively in the response to hyperosmotic and heat shock by preventing the aggregation of stress-denatured proteins, in association with DnaK and GrpE. It is the nucleotide exchange factor for DnaK and may function as a thermosensor. Unfolded proteins bind initially to DnaJ; upon interaction with the DnaJ-bound protein, DnaK hydrolyzes its bound ATP, resulting in the formation of a stable complex. GrpE releases ADP from DnaK; ATP binding to DnaK triggers the release of the substrate protein, thus completing the reaction cycle. Several rounds of ATP-dependent interactions between DnaJ, DnaK and GrpE are required for fully efficient folding. This chain is Protein GrpE, found in Legionella pneumophila (strain Lens).